We begin with the raw amino-acid sequence, 410 residues long: Exodeoxyribonuclease 7 large subunit (410 aa).

This sequence belongs to the XseA family. In terms of assembly, heterooligomer composed of large and small subunits.

Its subcellular location is the cytoplasm. The catalysed reaction is Exonucleolytic cleavage in either 5'- to 3'- or 3'- to 5'-direction to yield nucleoside 5'-phosphates.. Bidirectionally degrades single-stranded DNA into large acid-insoluble oligonucleotides, which are then degraded further into small acid-soluble oligonucleotides. This chain is Exodeoxyribonuclease 7 large subunit, found in Alkaliphilus metalliredigens (strain QYMF).